We begin with the raw amino-acid sequence, 249 residues long: General transcription factor IIF subunit 2 (249 aa).

An N-acetylalanine modification is found at A2. K22, K33, and K137 each carry N6-acetyllysine. At S142 the chain carries Phosphoserine. 2 residues coordinate DNA: G227 and H229. Position 248 is a phosphoserine (S248).

Belongs to the TFIIF beta subunit family. As to quaternary structure, heterodimer of an alpha and a beta subunit. Interacts with HTATSF1 and GPBP1. Interacts with URI1. Interacts with GTF2B (via N-terminus); this interaction is inhibited in presence of GTF2F1. Part of TBP-based Pol II pre-initiation complex (PIC), in which Pol II core assembles with general transcription factors and other specific initiation factors including GTF2E1, GTF2E2, GTF2F1, GTF2F2, TCEA1, ERCC2, ERCC3, GTF2H2, GTF2H3, GTF2H4, GTF2H5, GTF2A1, GTF2A2, GTF2B and TBP; this large multi-subunit PIC complex mediates DNA unwinding and targets Pol II core to the transcription start site where the first phosphodiester bond forms.

Its subcellular location is the nucleus. Functionally, TFIIF is a general transcription initiation factor that binds to RNA polymerase II and helps to recruit it to the initiation complex in collaboration with TFIIB. It promotes transcription elongation. The sequence is that of General transcription factor IIF subunit 2 (Gtf2f2) from Rattus norvegicus (Rat).